Here is a 101-residue protein sequence, read N- to C-terminus: Large ribosomal subunit protein uL24 (101 aa).

The protein belongs to the universal ribosomal protein uL24 family. Part of the 50S ribosomal subunit.

Functionally, one of two assembly initiator proteins, it binds directly to the 5'-end of the 23S rRNA, where it nucleates assembly of the 50S subunit. In terms of biological role, one of the proteins that surrounds the polypeptide exit tunnel on the outside of the subunit. This Borrelia turicatae (strain 91E135) protein is Large ribosomal subunit protein uL24.